We begin with the raw amino-acid sequence, 200 residues long: Serotonin N-acetyltransferase 2, chloroplastic (200 aa).

The transit peptide at 1 to 41 (MQMQAARPRVGVRPRGGIRPFPLPTLSFNNNSNRSACACAC) directs the protein to the chloroplast. The 141-residue stretch at 55-195 (FAVRRSSTGL…MAFYRSRQQI (141 aa)) folds into the N-acetyltransferase domain.

It is found in the cytoplasm. It localises to the plastid. The protein resides in the chloroplast. The enzyme catalyses serotonin + acetyl-CoA = N-acetylserotonin + CoA + H(+). It catalyses the reaction tyramine + acetyl-CoA = N-acetyltyramine + CoA + H(+). The catalysed reaction is tryptamine + acetyl-CoA = N-acetyltryptamine + CoA + H(+). It carries out the reaction 5-methoxytryptamine + acetyl-CoA = melatonin + CoA + H(+). Its pathway is aromatic compound metabolism; melatonin biosynthesis; melatonin from serotonin: step 1/2. In terms of biological role, catalyzes the N-acetylation of serotonin into N-acetylserotonin, the penultimate step in the synthesis of melatonin. Catalyzes in vitro the N-acetylation of tryptamine to produce N-acetyltryptamine, 5-methoxytryptamine to produce melatonin and tyramine to produce N-acetyltyramine. This is Serotonin N-acetyltransferase 2, chloroplastic from Oryza sativa subsp. japonica (Rice).